We begin with the raw amino-acid sequence, 410 residues long: Transcription factor rglT (410 aa).

The disordered stretch occupies residues 1–24 (MQFDSLPLPPSSSHDTTSVPPLKR). The segment at residues 28 to 55 (CDECRKRKLKCSGEATGCSRCLKQSLPC) is a DNA-binding region (zn(2)-C6 fungal-type). The interval 353-372 (HRTRTVESPNEPGSCSPVSH) is disordered. Polar residues predominate over residues 358–369 (VESPNEPGSCSP).

It localises to the nucleus. In terms of biological role, transcription factor that is involved in protection against oxidative stress. Binds to promoter regions of the gliotoxin (GT) biosynthetic genes gliZ, gliF, gliT, gliM, gliA and gtmA. Two related but different DNA motifs (5'-TCGG-3' and 5'-CGGNCGG-3') are specifically enriched among rglT binding sites in GT-inducing conditions. Also indirectly regulates the expression of gliP, gliG, gliH and gliN. Plays a key role in resistance against exogenously-added GT and GT biosynthesis, mainly through the direct regulation of gliT. Furthermore, rglT is important for virulence in chemotherapeutic mice with invasive pulmonary aspergillosis (IPA). In Aspergillus fumigatus (strain CBS 144.89 / FGSC A1163 / CEA10) (Neosartorya fumigata), this protein is Transcription factor rglT.